The chain runs to 216 residues: Golgi to ER traffic protein 1 (216 aa).

The Lumenal segment spans residues 1-9 (MFDISSSNL). The helical transmembrane segment at 10–29 (LISVLVVLFAKQLINAVGKA) threads the bilayer. Over 30–116 (TLENIGWSAY…YISKYIGYMI (87 aa)) the chain is Cytoplasmic. Positions 54–105 (LDQKNVELAKVSKERKSISAQDQYARWTKLNRQFDKLTGEINKLKEETSASR) form a coiled coil. The helical transmembrane segment at 117 to 137 (LVTTTLPIWFFRVWFRKAVLF) threads the bilayer. Over 138 to 161 (YFPTGVLPHYLEWFLALPFITTGG) the chain is Lumenal. Residues 162 to 178 (VGLTIWMSAVNNVVSSV) traverse the membrane as a helical segment. Residues 179–216 (IFLVKFPFEKEVPFPSKEVGNEKTSINKEEVSGTPAAN) are Cytoplasmic-facing. Residues 193 to 216 (PSKEVGNEKTSINKEEVSGTPAAN) are disordered. Positions 197–209 (VGNEKTSINKEEV) are enriched in basic and acidic residues.

Belongs to the WRB/GET1 family. Component of the Golgi to ER traffic (GET) complex, which is composed of GET1, GET2 and GET3. Within the complex, GET1 and GET2 form a heterotetramer which is stabilized by phosphatidylinositol binding and which binds to the GET3 homodimer.

The protein localises to the endoplasmic reticulum membrane. The protein resides in the golgi apparatus membrane. In terms of biological role, required for the post-translational delivery of tail-anchored (TA) proteins to the endoplasmic reticulum. Together with GET2, acts as a membrane receptor for soluble GET3, which recognizes and selectively binds the transmembrane domain of TA proteins in the cytosol. The GET complex cooperates with the HDEL receptor ERD2 to mediate the ATP-dependent retrieval of resident ER proteins that contain a C-terminal H-D-E-L retention signal from the Golgi to the ER. The sequence is that of Golgi to ER traffic protein 1 from Debaryomyces hansenii (strain ATCC 36239 / CBS 767 / BCRC 21394 / JCM 1990 / NBRC 0083 / IGC 2968) (Yeast).